Consider the following 61-residue polypeptide: Small ribosomal subunit protein uS14 (61 aa).

Cys24, Cys27, Cys40, and Cys43 together coordinate Zn(2+).

The protein belongs to the universal ribosomal protein uS14 family. Zinc-binding uS14 subfamily. As to quaternary structure, part of the 30S ribosomal subunit. Contacts proteins S3 and S10. Requires Zn(2+) as cofactor.

Its function is as follows. Binds 16S rRNA, required for the assembly of 30S particles and may also be responsible for determining the conformation of the 16S rRNA at the A site. The chain is Small ribosomal subunit protein uS14 from Limosilactobacillus fermentum (strain NBRC 3956 / LMG 18251) (Lactobacillus fermentum).